We begin with the raw amino-acid sequence, 380 residues long: 3-dehydroquinate synthase (380 aa).

Belongs to the archaeal-type DHQ synthase family.

It catalyses the reaction 2-amino-2,3,7-trideoxy-D-lyxo-hept-6-ulosonate + NAD(+) + H2O = 3-dehydroquinate + NH4(+) + NADH + H(+). In terms of biological role, catalyzes the oxidative deamination and cyclization of 2-amino-3,7-dideoxy-D-threo-hept-6-ulosonic acid (ADH) to yield 3-dehydroquinate (DHQ), which is fed into the canonical shikimic pathway of aromatic amino acid biosynthesis. The sequence is that of 3-dehydroquinate synthase from Methanosarcina barkeri (strain Fusaro / DSM 804).